Here is a 393-residue protein sequence, read N- to C-terminus: 4-hydroxyphenylpyruvate dioxygenase (393 aa).

T2 is subject to N-acetylthreonine. 2 VOC domains span residues 18–149 (HFHS…LVEK) and 180–338 (MIDH…IFTK). At K132 the chain carries N6-succinyllysine. H183 is a binding site for Fe cation. Phosphoserine occurs at positions 211, 226, and 250. Fe cation is bound by residues H266 and E349.

The protein belongs to the 4HPPD family. As to quaternary structure, homodimer. The cofactor is Fe cation.

It localises to the cytoplasm. Its subcellular location is the endoplasmic reticulum membrane. It is found in the golgi apparatus membrane. It catalyses the reaction 3-(4-hydroxyphenyl)pyruvate + O2 = homogentisate + CO2. It participates in amino-acid degradation; L-phenylalanine degradation; acetoacetate and fumarate from L-phenylalanine: step 3/6. In terms of biological role, catalyzes the conversion of 4-hydroxyphenylpyruvic acid to homogentisic acid, one of the steps in tyrosine catabolism. The polypeptide is 4-hydroxyphenylpyruvate dioxygenase (HPD) (Homo sapiens (Human)).